Here is a 2378-residue protein sequence, read N- to C-terminus: Serine/threonine-protein kinase ATM (2378 aa).

The FAT domain maps to 1415 to 1937 (LSARKRNTMM…LHTILMYDDE (523 aa)). Positions 2044–2366 (WKDVFTIADG…LLREATSADN (323 aa)) constitute a PI3K/PI4K catalytic domain. Residues 2050–2056 (IADGIST) form a G-loop region. A catalytic loop region spans residues 2218–2226 (GLGDRHASN). The interval 2238–2263 (HIDLGMILEYSKRTLPVPEQVPFRIT) is activation loop. Positions 2346 to 2378 (TAQSSNLQIRRLLREATSADNLSRMFCGWMPFL) constitute an FATC domain.

The protein belongs to the PI3/PI4-kinase family. ATM subfamily.

The protein localises to the nucleus. The catalysed reaction is L-seryl-[protein] + ATP = O-phospho-L-seryl-[protein] + ADP + H(+). It catalyses the reaction L-threonyl-[protein] + ATP = O-phospho-L-threonyl-[protein] + ADP + H(+). Its function is as follows. Serine/threonine protein kinase which activates checkpoint signaling in the presence of DNA double strand breaks (DSBs) and other forms of DNA damage induced by ionizing radiation and other genotoxic stresses such as UV. Plays a role in maintaining genome stability. This is Serine/threonine-protein kinase ATM (atm-1) from Caenorhabditis elegans.